Here is a 518-residue protein sequence, read N- to C-terminus: UDP-N-acetylmuramate--L-alanine ligase (518 aa).

158 to 164 (GTHGKTT) lines the ATP pocket.

It belongs to the MurCDEF family.

Its subcellular location is the cytoplasm. The catalysed reaction is UDP-N-acetyl-alpha-D-muramate + L-alanine + ATP = UDP-N-acetyl-alpha-D-muramoyl-L-alanine + ADP + phosphate + H(+). The protein operates within cell wall biogenesis; peptidoglycan biosynthesis. Functionally, cell wall formation. The sequence is that of UDP-N-acetylmuramate--L-alanine ligase from Crocosphaera subtropica (strain ATCC 51142 / BH68) (Cyanothece sp. (strain ATCC 51142)).